The sequence spans 807 residues: Glycerol-3-phosphate acyltransferase (807 aa).

An HXXXXD motif motif is present at residues 308-313 (CHRSHM).

This sequence belongs to the GPAT/DAPAT family.

It is found in the cell inner membrane. The catalysed reaction is sn-glycerol 3-phosphate + an acyl-CoA = a 1-acyl-sn-glycero-3-phosphate + CoA. It functions in the pathway phospholipid metabolism; CDP-diacylglycerol biosynthesis; CDP-diacylglycerol from sn-glycerol 3-phosphate: step 1/3. This Shewanella baltica (strain OS223) protein is Glycerol-3-phosphate acyltransferase.